Consider the following 246-residue polypeptide: 3'(2'),5'-bisphosphate nucleotidase CysQ (246 aa).

5 residues coordinate Mg(2+): Glu64, Asp83, Leu85, Asp86, and Asp205. Glu64 is a substrate binding site. Substrate contacts are provided by residues 85 to 88 (LDGT) and Asp205.

It belongs to the inositol monophosphatase superfamily. CysQ family. Mg(2+) is required as a cofactor.

The protein localises to the cell inner membrane. It catalyses the reaction adenosine 3',5'-bisphosphate + H2O = AMP + phosphate. In terms of biological role, converts adenosine-3',5'-bisphosphate (PAP) to AMP. The protein is 3'(2'),5'-bisphosphate nucleotidase CysQ of Salmonella typhimurium (strain LT2 / SGSC1412 / ATCC 700720).